Here is a 157-residue protein sequence, read N- to C-terminus: Small ribosomal subunit protein uS7 (157 aa).

The protein belongs to the universal ribosomal protein uS7 family. As to quaternary structure, part of the 30S ribosomal subunit. Contacts proteins S9 and S11.

Its function is as follows. One of the primary rRNA binding proteins, it binds directly to 16S rRNA where it nucleates assembly of the head domain of the 30S subunit. Is located at the subunit interface close to the decoding center, probably blocks exit of the E-site tRNA. The protein is Small ribosomal subunit protein uS7 of Chloroflexus aggregans (strain MD-66 / DSM 9485).